A 452-amino-acid chain; its full sequence is Protein EARLY-RESPONSIVE TO DEHYDRATION 7, chloroplastic (452 aa).

The segment covering 1–18 (MESSGDKQTSSLYPTVDT) has biased composition (polar residues). A chloroplast-targeting transit peptide spans 1–28 (MESSGDKQTSSLYPTVDTSNPEAPINPS). The interval 1 to 37 (MESSGDKQTSSLYPTVDTSNPEAPINPSSSSSTNNLY) is disordered. Over residues 19 to 37 (SNPEAPINPSSSSSTNNLY) the composition is skewed to low complexity. Residues 258–426 (IATGSGHLIK…AWVAFKIRKA (169 aa)) enclose the Senescence domain.

Its subcellular location is the plastid. It is found in the chloroplast. The protein is Protein EARLY-RESPONSIVE TO DEHYDRATION 7, chloroplastic of Arabidopsis thaliana (Mouse-ear cress).